The chain runs to 876 residues: Leucine--tRNA ligase (876 aa).

Residues 43-53 (PYPSGRIHMGH) carry the 'HIGH' region motif. The 'KMSKS' region signature appears at 632 to 636 (KMSKS). Residue Lys635 participates in ATP binding.

This sequence belongs to the class-I aminoacyl-tRNA synthetase family.

Its subcellular location is the cytoplasm. It carries out the reaction tRNA(Leu) + L-leucine + ATP = L-leucyl-tRNA(Leu) + AMP + diphosphate. This is Leucine--tRNA ligase from Rhodopseudomonas palustris (strain TIE-1).